The sequence spans 208 residues: Ribosomal RNA large subunit methyltransferase E (208 aa).

S-adenosyl-L-methionine is bound by residues Gly-62, Trp-64, Asp-82, Asp-98, and Asp-123. Catalysis depends on Lys-163, which acts as the Proton acceptor.

It belongs to the class I-like SAM-binding methyltransferase superfamily. RNA methyltransferase RlmE family.

It is found in the cytoplasm. It carries out the reaction uridine(2552) in 23S rRNA + S-adenosyl-L-methionine = 2'-O-methyluridine(2552) in 23S rRNA + S-adenosyl-L-homocysteine + H(+). Its function is as follows. Specifically methylates the uridine in position 2552 of 23S rRNA at the 2'-O position of the ribose in the fully assembled 50S ribosomal subunit. In Edwardsiella ictaluri (strain 93-146), this protein is Ribosomal RNA large subunit methyltransferase E.